The primary structure comprises 203 residues: Ribosomal RNA large subunit methyltransferase E (203 aa).

Residues Gly51, Trp53, Asp69, Asp85, and Asp108 each contribute to the S-adenosyl-L-methionine site. Lys148 functions as the Proton acceptor in the catalytic mechanism.

The protein belongs to the class I-like SAM-binding methyltransferase superfamily. RNA methyltransferase RlmE family.

It localises to the cytoplasm. The catalysed reaction is uridine(2552) in 23S rRNA + S-adenosyl-L-methionine = 2'-O-methyluridine(2552) in 23S rRNA + S-adenosyl-L-homocysteine + H(+). Specifically methylates the uridine in position 2552 of 23S rRNA at the 2'-O position of the ribose in the fully assembled 50S ribosomal subunit. The protein is Ribosomal RNA large subunit methyltransferase E of Methanocorpusculum labreanum (strain ATCC 43576 / DSM 4855 / Z).